The following is a 91-amino-acid chain: Early E3B 10.4 kDa protein (91 aa).

The signal sequence occupies residues 1-21 (MVTVLLIFLCLPVIFSSSTFA). Residues 22 to 33 (AVSDLDPECLAP) are Lumenal-facing. The helical transmembrane segment at 34 to 56 (FAVYLIFTFVTATCVCSIITLLI) threads the bilayer. Topologically, residues 57-91 (TSLQFFDYYYVRIVYRRHHPRYQNPQIAALLQLQP) are cytoplasmic.

Belongs to the adenoviridae E3B family.

The protein resides in the host endoplasmic reticulum membrane. Its function is as follows. Down-regulates the EGF receptor. In Homo sapiens (Human), this protein is Early E3B 10.4 kDa protein.